A 158-amino-acid chain; its full sequence is Fibroblast growth factor 2 (158 aa).

Positions 1–12 (MAAGAAGSITTL) are excised as a propeptide. Asn39 is a binding site for heparin. The heparin-binding stretch occupies residues 131–147 (KRTGQYKPGPKTGPGQK).

This sequence belongs to the heparin-binding growth factors family.

The protein resides in the secreted. Its subcellular location is the nucleus. In terms of biological role, acts as a ligand for FGFR1, FGFR2, FGFR3 and FGFR4. Also acts as an integrin ligand which is required for FGF2 signaling. Plays an important role in the regulation of cell survival, cell division, cell differentiation and cell migration. Functions as a potent mitogen in vitro. Can induce angiogenesis. In Gallus gallus (Chicken), this protein is Fibroblast growth factor 2 (FGF2).